The chain runs to 486 residues: N-succinylglutamate 5-semialdehyde dehydrogenase (486 aa).

G220–G225 is a binding site for NAD(+). Residues E243 and C277 contribute to the active site.

The protein belongs to the aldehyde dehydrogenase family. AstD subfamily.

The catalysed reaction is N-succinyl-L-glutamate 5-semialdehyde + NAD(+) + H2O = N-succinyl-L-glutamate + NADH + 2 H(+). The protein operates within amino-acid degradation; L-arginine degradation via AST pathway; L-glutamate and succinate from L-arginine: step 4/5. Catalyzes the NAD-dependent reduction of succinylglutamate semialdehyde into succinylglutamate. The sequence is that of N-succinylglutamate 5-semialdehyde dehydrogenase from Shewanella sp. (strain W3-18-1).